A 194-amino-acid chain; its full sequence is Probable thymidylate kinase (194 aa).

7–14 lines the ATP pocket; sequence GIDGSGKT.

It belongs to the thymidylate kinase family.

It catalyses the reaction dTMP + ATP = dTDP + ADP. In Methanothermobacter thermautotrophicus (strain ATCC 29096 / DSM 1053 / JCM 10044 / NBRC 100330 / Delta H) (Methanobacterium thermoautotrophicum), this protein is Probable thymidylate kinase (tmk).